The sequence spans 606 residues: Aspartate--tRNA(Asp/Asn) ligase (606 aa).

L-aspartate is bound at residue Glu-177. An aspartate region spans residues 201 to 204 (QLFK). Arg-223 provides a ligand contact to L-aspartate. Residues 223–225 (RDE) and Gln-232 contribute to the ATP site. His-461 contributes to the L-aspartate binding site. Glu-499 contributes to the ATP binding site. Arg-506 lines the L-aspartate pocket. 551–554 (GMDR) provides a ligand contact to ATP.

This sequence belongs to the class-II aminoacyl-tRNA synthetase family. Type 1 subfamily. Homodimer.

It localises to the cytoplasm. It carries out the reaction tRNA(Asx) + L-aspartate + ATP = L-aspartyl-tRNA(Asx) + AMP + diphosphate. Aspartyl-tRNA synthetase with relaxed tRNA specificity since it is able to aspartylate not only its cognate tRNA(Asp) but also tRNA(Asn). Reaction proceeds in two steps: L-aspartate is first activated by ATP to form Asp-AMP and then transferred to the acceptor end of tRNA(Asp/Asn). The chain is Aspartate--tRNA(Asp/Asn) ligase from Prochlorococcus marinus (strain MIT 9303).